Here is a 750-residue protein sequence, read N- to C-terminus: Photosystem I P700 chlorophyll a apoprotein A1 (750 aa).

The next 8 membrane-spanning stretches (helical) occupy residues 70–93 (VFSAHFGQLSIIFLWLSGMYFHGA), 156–179 (LYCTAIGALVFAALMLFAGWFHYH), 195–219 (LNHHLAGLLGLGSLSWAGHQVHVSL), 291–309 (IAHHHLAIAILFLIAGHMY), 346–369 (WHAQLSLNLAMLGSLTIIVAHHMY), 385–411 (LSLFTHHMWIGGFLIVGAAAHAAIFMV), 433–455 (AIISHLNWVCIFLGFHSFGLYIH), and 531–549 (FLVHHIHAFTIHVTVLILL). [4Fe-4S] cluster-binding residues include Cys573 and Cys582. 2 helical membrane passes run 589–610 (HVFLGLFWMYNAISVVIFHFSW) and 664–686 (LSAYGLFFLGAHFVWAFSLMFLF). Chlorophyll a' is bound at residue His675. Positions 683 and 691 each coordinate chlorophyll a. Trp692 lines the phylloquinone pocket. A helical transmembrane segment spans residues 724–744 (AVGVTHYLLGGIATTWAFFLA).

Belongs to the PsaA/PsaB family. The PsaA/B heterodimer binds the P700 chlorophyll special pair and subsequent electron acceptors. PSI consists of a core antenna complex that captures photons, and an electron transfer chain that converts photonic excitation into a charge separation. The eukaryotic PSI reaction center is composed of at least 11 subunits. P700 is a chlorophyll a/chlorophyll a' dimer, A0 is one or more chlorophyll a, A1 is one or both phylloquinones and FX is a shared 4Fe-4S iron-sulfur center. is required as a cofactor.

The protein resides in the plastid. Its subcellular location is the chloroplast thylakoid membrane. It carries out the reaction reduced [plastocyanin] + hnu + oxidized [2Fe-2S]-[ferredoxin] = oxidized [plastocyanin] + reduced [2Fe-2S]-[ferredoxin]. Functionally, psaA and PsaB bind P700, the primary electron donor of photosystem I (PSI), as well as the electron acceptors A0, A1 and FX. PSI is a plastocyanin-ferredoxin oxidoreductase, converting photonic excitation into a charge separation, which transfers an electron from the donor P700 chlorophyll pair to the spectroscopically characterized acceptors A0, A1, FX, FA and FB in turn. Oxidized P700 is reduced on the lumenal side of the thylakoid membrane by plastocyanin. The sequence is that of Photosystem I P700 chlorophyll a apoprotein A1 from Olimarabidopsis pumila (Dwarf rocket).